The following is a 444-amino-acid chain: Acyl-CoA 6-desaturase (444 aa).

At 1-122 the chain is on the cytoplasmic side; the sequence is MGKGGNQDEG…FRALRKTAED (122 aa). The Cytochrome b5 heme-binding domain maps to 18-95; that stretch reads MPTFRWEEIQ…MKPLLIGELA (78 aa). A helical membrane pass occupies residues 123–143; sequence MNLFKSNQLFFLLHLAHIIAM. The Lumenal segment spans residues 144-147; the sequence is ESIA. A helical membrane pass occupies residues 148–168; that stretch reads WFTLFYFGNGWIPTIITAFVL. At 169-264 the chain is on the cytoplasmic side; sequence ATSQAQAGWL…KYLPYNHQHE (96 aa). The short motif at 180–184 is the Histidine box-1 element; it reads HDYGH. The short motif at 217-221 is the Histidine box-2 element; the sequence is HFQHH. Residues 265–285 form a helical membrane-spanning segment; it reads YFFLIGPPLLIPLYFQYQIIM. Residues 286-305 lie on the Lumenal side of the membrane; that stretch reads TMIVRKYWADLAWAISYYTR. Residues 306–326 traverse the membrane as a helical segment; that stretch reads FFITYIPFYGVLGSILFLNFI. Over 327–444 the chain is Cytoplasmic; sequence RFLESHWFVW…QLWLDAYLHK (118 aa). The short motif at 382-386 is the Histidine box-3 element; that stretch reads QIEHH.

The protein belongs to the fatty acid desaturase type 1 family.

It localises to the endoplasmic reticulum membrane. The catalysed reaction is (9Z,12Z)-octadecadienoyl-CoA + 2 Fe(II)-[cytochrome b5] + O2 + 2 H(+) = (6Z,9Z,12Z)-octadecatrienoyl-CoA + 2 Fe(III)-[cytochrome b5] + 2 H2O. It catalyses the reaction (9Z,12Z,15Z)-octadecatrienoyl-CoA + 2 Fe(II)-[cytochrome b5] + O2 + 2 H(+) = (6Z,9Z,12Z,15Z)-octadecatetraenoyl-CoA + 2 Fe(III)-[cytochrome b5] + 2 H2O. The enzyme catalyses (9Z,12Z,15Z,18Z,21Z)-tetracosapentaenoyl-CoA + 2 Fe(II)-[cytochrome b5] + O2 + 2 H(+) = (6Z,9Z,12Z,15Z,18Z,21Z)-tetracosahexaenoyl-CoA + 2 Fe(III)-[cytochrome b5] + 2 H2O. It carries out the reaction (11E)-octadecenoyl-CoA + 2 Fe(II)-[cytochrome b5] + O2 + 2 H(+) = (6Z,11E)-octadecadienoyl-CoA + 2 Fe(III)-[cytochrome b5] + 2 H2O. The catalysed reaction is (11Z,14Z)-eicosadienoyl-CoA + 2 Fe(II)-[cytochrome b5] + O2 + 2 H(+) = (8Z,11Z,14Z)-eicosatrienoyl-CoA + 2 Fe(III)-[cytochrome b5] + 2 H2O. It catalyses the reaction (11Z,14Z,17Z)-eicosatrienoyl-CoA + 2 Fe(II)-[cytochrome b5] + O2 + 2 H(+) = (8Z,11Z,14Z,17Z)-eicosatetraenoyl-CoA + 2 Fe(III)-[cytochrome b5] + 2 H2O. Its pathway is lipid metabolism; polyunsaturated fatty acid biosynthesis. Its function is as follows. Involved in the biosynthesis of highly unsaturated fatty acids (HUFA) from the essential polyunsaturated fatty acids (PUFA) linoleic acid (LA) (18:2n-6) and alpha-linolenic acid (ALA) (18:3n-3) precursors, acting as a fatty acyl-coenzyme A (CoA) desaturase that introduces a cis double bond at carbon 6 of the fatty acyl chain. Catalyzes the first and rate limiting step in this pathway which is the desaturation of LA (18:2n-6) and ALA (18:3n-3) into gamma-linoleate (GLA) (18:3n-6) and stearidonate (18:4n-3), respectively. Subsequently, in the biosynthetic pathway of HUFA n-3 series, it desaturates tetracosapentaenoate (24:5n-3) to tetracosahexaenoate (24:6n-3), which is then converted to docosahexaenoate (DHA)(22:6n-3), an important lipid for nervous system function. It can also desaturate (11E)-octadecenoate (trans-vaccenoate, a metabolite in the biohydrogenation pathway of LA and the predominant trans fatty acid in cow milk) at carbon 6 generating (6Z,11E)-octadecadienoate. In addition to Delta-6 activity, this enzyme exhibits Delta-8 activity with slight biases toward n-3 fatty acyl-CoA substrates. The sequence is that of Acyl-CoA 6-desaturase (FADS2) from Bos taurus (Bovine).